A 224-amino-acid polypeptide reads, in one-letter code: MMQFDRSGLDGSPVDYETALQLQRRLHGEVATGTTAETMLLLEHAPVYTAGKRTTDDERPTDGTPVVDVDRGGKITWHGPGQLVGYPILRLREPVDVVGYVRRLESALIRVLGELGIAGERIEGRSGVWLPGDGTAPDRKLAAIGIRVAEGVTMHGFALNCSNSLEAYDRIVACGIRDAGVSTITEALGRTVTPQDAAPMVVAALQAEFGREAAPRAAQTETAA.

The region spanning 33-213 (GTTAETMLLL…ALQAEFGREA (181 aa)) is the BPL/LPL catalytic domain. Residues 51 to 71 (GKRTTDDERPTDGTPVVDVDR) form a disordered region. Residues 71 to 78 (RGGKITWH), 143 to 145 (AIG), and 156 to 158 (GFA) each bind substrate. Cys174 acts as the Acyl-thioester intermediate in catalysis.

The protein belongs to the LipB family.

Its subcellular location is the cytoplasm. It catalyses the reaction octanoyl-[ACP] + L-lysyl-[protein] = N(6)-octanoyl-L-lysyl-[protein] + holo-[ACP] + H(+). The protein operates within protein modification; protein lipoylation via endogenous pathway; protein N(6)-(lipoyl)lysine from octanoyl-[acyl-carrier-protein]: step 1/2. In terms of biological role, catalyzes the transfer of endogenously produced octanoic acid from octanoyl-acyl-carrier-protein onto the lipoyl domains of lipoate-dependent enzymes. Lipoyl-ACP can also act as a substrate although octanoyl-ACP is likely to be the physiological substrate. The polypeptide is Octanoyltransferase (Leifsonia xyli subsp. xyli (strain CTCB07)).